The chain runs to 371 residues: Leu/Ile/Val-binding protein homolog 2 (371 aa).

The signal sequence occupies residues 1-23 (MKKSLFCGVCLCALVAMGGTSFA).

The protein belongs to the leucine-binding protein family.

Functionally, component of an amino-acid transport system. This chain is Leu/Ile/Val-binding protein homolog 2, found in Brucella abortus (strain 2308).